The chain runs to 416 residues: Phosphoglycerate kinase (416 aa).

Ser-2 is subject to N-acetylserine. (2R)-3-phosphoglycerate is bound by residues Val-23, Asp-24, Phe-25, Asn-26, Gln-38, Arg-39, Ser-62, His-63, Gly-65, and Arg-66. Lys-82 participates in a covalent cross-link: Glycyl lysine isopeptide (Lys-Gly) (interchain with G-Cter in ubiquitin). The residue at position 93 (Thr-93) is a Phosphothreonine. A Phosphoserine modification is found at Ser-110. Positions 121 and 122 each coordinate (2R)-3-phosphoglycerate. Phosphoserine is present on residues Ser-130 and Ser-154. Residues His-168 and Arg-169 each contribute to the (2R)-3-phosphoglycerate site. Ser-172 is subject to Phosphoserine. Residue Lys-197 forms a Glycyl lysine isopeptide (Lys-Gly) (interchain with G-Cter in ubiquitin) linkage. Position 203 is a phosphothreonine (Thr-203). ADP is bound at residue Gly-212. A CDP-binding site is contributed by Gly-212. Residues Ala-213 and Lys-214 each coordinate AMP. ATP contacts are provided by Ala-213 and Lys-214. Ala-213 contacts Mg(2+). 2 residues coordinate Mg(2+): Ala-216 and Asp-217. Asp-217 provides a ligand contact to CDP. Residue Lys-218 participates in AMP binding. Lys-218 contacts ATP. Gly-236 contributes to the ADP binding site. Position 236 (Gly-236) interacts with CDP. Gly-237 serves as a coordination point for AMP. ATP is bound at residue Gly-237. The residue at position 241 (Thr-241) is a Phosphothreonine. Glycyl lysine isopeptide (Lys-Gly) (interchain with G-Cter in ubiquitin) cross-links involve residues Lys-258 and Lys-274. Thr-298 carries the phosphothreonine modification. Residue Lys-302 forms a Glycyl lysine isopeptide (Lys-Gly) (interchain with G-Cter in ubiquitin) linkage. Residue Gly-311 participates in AMP binding. ATP is bound by residues Gly-311 and Leu-312. Ser-318 carries the phosphoserine modification. Position 331 is a phosphothreonine (Thr-331). Asn-335 lines the ATP pocket. CDP-binding residues include Gly-336 and Phe-341. Phe-341 contacts ADP. An AMP-binding site is contributed by Glu-342. Glu-342 contacts ATP. Gly-371 lines the (2R)-3-phosphoglycerate pocket. ATP contacts are provided by Asp-373 and Thr-374. Residue Asp-373 coordinates Mg(2+). Residue Thr-392 is modified to Phosphothreonine. Residues Gly-394 and Gly-395 each coordinate (2R)-3-phosphoglycerate.

Belongs to the phosphoglycerate kinase family. In terms of assembly, monomer. The cofactor is Mg(2+).

Its subcellular location is the cytoplasm. It localises to the mitochondrion. It carries out the reaction (2R)-3-phosphoglycerate + ATP = (2R)-3-phospho-glyceroyl phosphate + ADP. The protein operates within carbohydrate degradation; glycolysis; pyruvate from D-glyceraldehyde 3-phosphate: step 2/5. Catalyzes one of the two ATP producing reactions in the glycolytic pathway via the reversible conversion of 1,3-diphosphoglycerate to 3-phosphoglycerate. Both L- and D- forms of purine and pyrimidine nucleotides can be used as substrates, but the activity is much lower on pyrimidines. Negatively regulates the biosynthesis of acetyl-CoA from pyruvate in the mitochondrion. In Saccharomyces cerevisiae (strain ATCC 204508 / S288c) (Baker's yeast), this protein is Phosphoglycerate kinase (PGK1).